Consider the following 113-residue polypeptide: uncharacterized protein (113 aa).

It is found in the cytoplasm. It localises to the nucleus. This is an uncharacterized protein from Saccharomyces cerevisiae (strain ATCC 204508 / S288c) (Baker's yeast).